The sequence spans 395 residues: Elongation factor Tu (395 aa).

Positions 10 to 204 constitute a tr-type G domain; sequence KTHANIGTIG…AVDSYIPTPE (195 aa). The segment at 19-26 is G1; the sequence is GHVDHGKT. GTP is bound at residue 19 to 26; sequence GHVDHGKT. Position 26 (T26) interacts with Mg(2+). A G2 region spans residues 60 to 64; the sequence is GITIN. The segment at 81-84 is G3; it reads DCPG. Residues 81–85 and 136–139 contribute to the GTP site; these read DCPGH and NKCD. The tract at residues 136–139 is G4; the sequence is NKCD. A G5 region spans residues 174-176; that stretch reads SAL.

It belongs to the TRAFAC class translation factor GTPase superfamily. Classic translation factor GTPase family. EF-Tu/EF-1A subfamily. As to quaternary structure, monomer.

The protein localises to the cytoplasm. The enzyme catalyses GTP + H2O = GDP + phosphate + H(+). GTP hydrolase that promotes the GTP-dependent binding of aminoacyl-tRNA to the A-site of ribosomes during protein biosynthesis. The protein is Elongation factor Tu of Lysinibacillus sphaericus (strain C3-41).